A 134-amino-acid polypeptide reads, in one-letter code: Acyl carrier protein SF2, chloroplastic (134 aa).

The N-terminal 51 residues, 1–51 (MSTTFCSSVSMQATSLAATTRISFQKPALVSTTNLSFNLRRSIPTRFSISC), are a transit peptide targeting the chloroplast. The Carrier domain maps to 55 to 130 (PETVEKVSKI…EAAELIEELV (76 aa)). S90 carries the post-translational modification O-(pantetheine 4'-phosphoryl)serine.

This sequence belongs to the acyl carrier protein (ACP) family. 4'-phosphopantetheine is transferred from CoA to a specific serine of apo-ACP by acpS. This modification is essential for activity because fatty acids are bound in thioester linkage to the sulfhydryl of the prosthetic group.

The protein resides in the plastid. The protein localises to the chloroplast. The protein operates within lipid metabolism; fatty acid biosynthesis. In terms of biological role, carrier of the growing fatty acid chain in fatty acid biosynthesis. The sequence is that of Acyl carrier protein SF2, chloroplastic (Acl1.1) from Brassica campestris (Field mustard).